The chain runs to 391 residues: Transposase for insertion sequence element IS905 (391 aa).

The protein belongs to the transposase mutator family.

Required for the transposition of the insertion element. The polypeptide is Transposase for insertion sequence element IS905 (tra905) (Lactococcus lactis subsp. lactis (strain IL1403) (Streptococcus lactis)).